Reading from the N-terminus, the 500-residue chain is Cryptochrome DASH (500 aa).

Residues 4-138 (KTVLVWYRND…PVRSFWGTTL (135 aa)) form the Photolyase/cryptochrome alpha/beta domain.

The protein belongs to the DNA photolyase class-1 family. FAD is required as a cofactor. (6R)-5,10-methylene-5,6,7,8-tetrahydrofolate serves as cofactor.

Functionally, may have a photoreceptor function. Binds DNA; probably functions as a transcriptional repressor. In Gloeobacter violaceus (strain ATCC 29082 / PCC 7421), this protein is Cryptochrome DASH (cry).